Here is a 299-residue protein sequence, read N- to C-terminus: NAD kinase (299 aa).

The Proton acceptor role is filled by D71. Residues 71-72 (DG), 145-146 (ND), R173, D175, 186-191 (TAYSLS), A210, and Q248 each bind NAD(+).

The protein belongs to the NAD kinase family. It depends on a divalent metal cation as a cofactor.

It is found in the cytoplasm. It catalyses the reaction NAD(+) + ATP = ADP + NADP(+) + H(+). In terms of biological role, involved in the regulation of the intracellular balance of NAD and NADP, and is a key enzyme in the biosynthesis of NADP. Catalyzes specifically the phosphorylation on 2'-hydroxyl of the adenosine moiety of NAD to yield NADP. The chain is NAD kinase from Bordetella bronchiseptica (strain ATCC BAA-588 / NCTC 13252 / RB50) (Alcaligenes bronchisepticus).